Here is a 279-residue protein sequence, read N- to C-terminus: HTH-type transcriptional regulator HdfR (279 aa).

An HTH lysR-type domain is found at 1–58 (MDTELLKTFLEVSRTRHFGRAAESLYLTQSAVSFRIRQLENQLGVNLFTRHRNNIRLT). The H-T-H motif DNA-binding region spans 18 to 37 (FGRAAESLYLTQSAVSFRIR).

This sequence belongs to the LysR transcriptional regulatory family.

Functionally, negatively regulates the transcription of the flagellar master operon flhDC by binding to the upstream region of the operon. This chain is HTH-type transcriptional regulator HdfR, found in Escherichia coli O17:K52:H18 (strain UMN026 / ExPEC).